We begin with the raw amino-acid sequence, 263 residues long: Small ribosomal subunit protein uS2 (263 aa).

This sequence belongs to the universal ribosomal protein uS2 family. Component of the small ribosomal subunit. Mature ribosomes consist of a small (40S) and a large (60S) subunit. The 40S subunit contains about 33 different proteins and 1 molecule of RNA (18S). The 60S subunit contains about 49 different proteins and 3 molecules of RNA (25S, 5.8S and 5S). Interacts with RPS21.

It localises to the cytoplasm. Required for the assembly and/or stability of the 40S ribosomal subunit. Required for the processing of the 20S rRNA-precursor to mature 18S rRNA in a late step of the maturation of 40S ribosomal subunits. The protein is Small ribosomal subunit protein uS2 of Vairimorpha ceranae (strain BRL01) (Microsporidian parasite).